The chain runs to 305 residues: NK1 transcription factor-related protein 2 (305 aa).

2 disordered regions span residues 51–158 (EEVE…KPRR) and 210–257 (KWKK…PGAL). Residues 87–96 (SEAEEEEEAE) are compositionally biased toward acidic residues. Over residues 97-115 (DAGRAHQPERWQGVHEGSP) the composition is skewed to basic and acidic residues. A compositionally biased stretch (low complexity) spans 129–140 (AEGLPASPGSPG). The segment at residues 156–215 (PRRARTAFTYEQLVALENKFRATRYLSVCERLNLALSLSLTETQVKIWFQNRRTKWKKQN) is a DNA-binding region (homeobox).

Belongs to the NK-1 homeobox family. In terms of assembly, interacts (via the homeodomain) with HIPK1, HIPK2, and HIPK3. Post-translationally, phosphorylated by HIPK2 in vitro. Expression detected in the brain, testis and spleen. In the testis, expressed in the germ cells of the seminiferous epithelium, predominantly in elongating spermatids and spermatozoa. Expressed throughout the brain with highest levels in regions of the cerebral cortex, hippocampus, diencephalon, pons, medulla and cerebellum.

The protein localises to the nucleus. It localises to the nucleolus. In terms of biological role, transcriptional repressor. May play a role in early development as a Wnt/beta-catenin effector, hence controlling pluripotency and preimplantation development of embryonic stem cells. May promote adipogenesis in mesenchymal stem cells, possibly by inhibiting the expression of the antiadipogenic factor NR2F2. May inhibit osteoblastogenic differentiation. In Mus musculus (Mouse), this protein is NK1 transcription factor-related protein 2 (Nkx1-2).